A 183-amino-acid chain; its full sequence is ATP synthase subunit b, chloroplastic (183 aa).

The chain crosses the membrane as a helical span at residues 25-45 (DILATNLINLTVVVGVLIFFG).

The protein belongs to the ATPase B chain family. In terms of assembly, F-type ATPases have 2 components, F(1) - the catalytic core - and F(0) - the membrane proton channel. F(1) has five subunits: alpha(3), beta(3), gamma(1), delta(1), epsilon(1). F(0) has four main subunits: a(1), b(1), b'(1) and c(10-14). The alpha and beta chains form an alternating ring which encloses part of the gamma chain. F(1) is attached to F(0) by a central stalk formed by the gamma and epsilon chains, while a peripheral stalk is formed by the delta, b and b' chains.

Its subcellular location is the plastid. The protein resides in the chloroplast thylakoid membrane. F(1)F(0) ATP synthase produces ATP from ADP in the presence of a proton or sodium gradient. F-type ATPases consist of two structural domains, F(1) containing the extramembraneous catalytic core and F(0) containing the membrane proton channel, linked together by a central stalk and a peripheral stalk. During catalysis, ATP synthesis in the catalytic domain of F(1) is coupled via a rotary mechanism of the central stalk subunits to proton translocation. Functionally, component of the F(0) channel, it forms part of the peripheral stalk, linking F(1) to F(0). This Sorghum bicolor (Sorghum) protein is ATP synthase subunit b, chloroplastic.